A 449-amino-acid polypeptide reads, in one-letter code: F-box/LRR-repeat protein At3g60040 (449 aa).

Positions 12–64 (RDAISWLPDEVLGKILSLIPTKQAVSTSLLAKKWRTIFRLVDHLELDDSFSLQ) constitute an F-box domain. LRR repeat units lie at residues 161–188 (LTLG…FIDT), 191–215 (FYDI…SVHH), 216–237 (HDFI…SVDY), 239–263 (CPDD…EYSH), 287–312 (ERKV…HLSP), and 340–365 (KNKR…IVKD).

This Arabidopsis thaliana (Mouse-ear cress) protein is F-box/LRR-repeat protein At3g60040.